We begin with the raw amino-acid sequence, 88 residues long: uncharacterized protein (88 aa).

Helical transmembrane passes span 3 to 23 (VFILFYLWIVPIVIGILCSVA), 33 to 53 (VAPGIAMIVLSIISLITAFTA), and 61 to 81 (FIGGMFLFGTFLVGSAFPFFF).

It is found in the cell membrane. This is an uncharacterized protein from Bacillus subtilis (strain 168).